The chain runs to 215 residues: Ribonuclease T (215 aa).

An Exonuclease domain is found at 20-194 (VVIDVETAGF…YDTERTAVLF (175 aa)). Positions 23, 25, 181, and 186 each coordinate Mg(2+). His-181 (proton donor/acceptor) is an active-site residue.

This sequence belongs to the RNase T family. Homodimer. It depends on Mg(2+) as a cofactor.

Its function is as follows. Trims short 3' overhangs of a variety of RNA species, leaving a one or two nucleotide 3' overhang. Responsible for the end-turnover of tRNA: specifically removes the terminal AMP residue from uncharged tRNA (tRNA-C-C-A). Also appears to be involved in tRNA biosynthesis. The chain is Ribonuclease T from Salmonella paratyphi A (strain ATCC 9150 / SARB42).